Here is a 207-residue protein sequence, read N- to C-terminus: Putative 3-methyladenine DNA glycosylase (207 aa).

Belongs to the DNA glycosylase MPG family.

The polypeptide is Putative 3-methyladenine DNA glycosylase (Listeria monocytogenes serotype 4a (strain HCC23)).